A 270-amino-acid chain; its full sequence is 3-methyl-2-oxobutanoate hydroxymethyltransferase (270 aa).

Mg(2+) is bound by residues D50 and D89. Residues 50-51 (DS), D89, and K118 contribute to the 3-methyl-2-oxobutanoate site. E120 serves as a coordination point for Mg(2+). The Proton acceptor role is filled by E187.

This sequence belongs to the PanB family. As to quaternary structure, homodecamer; pentamer of dimers. Mg(2+) serves as cofactor.

It localises to the cytoplasm. The enzyme catalyses 3-methyl-2-oxobutanoate + (6R)-5,10-methylene-5,6,7,8-tetrahydrofolate + H2O = 2-dehydropantoate + (6S)-5,6,7,8-tetrahydrofolate. It participates in cofactor biosynthesis; (R)-pantothenate biosynthesis; (R)-pantoate from 3-methyl-2-oxobutanoate: step 1/2. Its function is as follows. Catalyzes the reversible reaction in which hydroxymethyl group from 5,10-methylenetetrahydrofolate is transferred onto alpha-ketoisovalerate to form ketopantoate. This is 3-methyl-2-oxobutanoate hydroxymethyltransferase from Helicobacter pylori (strain ATCC 700392 / 26695) (Campylobacter pylori).